The sequence spans 640 residues: Large subunit GTPase 1 homolog (640 aa).

The CP-type G domain maps to 165-426 (WRQLWRVIER…LCDCPGLVMP (262 aa)). 213-216 (NKAD) serves as a coordination point for GTP. The disordered stretch occupies residues 251–341 (AEERGEDAMD…ESTATSSFYN (91 aa)). 3 stretches are compositionally biased toward acidic residues: residues 253-270 (ERGE…TEEE), 290-304 (EKDE…EGED), and 320-331 (ESGDEDHAEENP). Positions 332–341 (ESTATSSFYN) are enriched in polar residues. Residues 375 to 382 (GYPNVGKS) and 419 to 422 (DCPG) each bind GTP. The tract at residues 602 to 640 (GPVEAGKANTEQQAGKPWKKHGNRNKKEKVRRLNKHLDA) is disordered. The segment covering 618–640 (PWKKHGNRNKKEKVRRLNKHLDA) has biased composition (basic residues).

Belongs to the TRAFAC class YlqF/YawG GTPase family. LSG1 subfamily.

It is found in the cytoplasm. The protein resides in the endoplasmic reticulum. Its subcellular location is the nucleus. The protein localises to the cajal body. It carries out the reaction GTP + H2O = GDP + phosphate + H(+). Functionally, functions as a GTPase. May act by mediating the release of NMD3 from the 60S ribosomal subunit after export into the cytoplasm during the 60S ribosomal subunit maturation. The chain is Large subunit GTPase 1 homolog from Danio rerio (Zebrafish).